A 191-amino-acid chain; its full sequence is Photosystem I assembly protein Ycf4 (191 aa).

Transmembrane regions (helical) follow at residues 34–54 (VASM…SSYF) and 68–88 (IFVP…LLAI).

Belongs to the Ycf4 family.

The protein resides in the cellular thylakoid membrane. In terms of biological role, seems to be required for the assembly of the photosystem I complex. The chain is Photosystem I assembly protein Ycf4 from Prochlorococcus marinus (strain NATL2A).